We begin with the raw amino-acid sequence, 264 residues long: Diphthine synthase (264 aa).

S-adenosyl-L-methionine-binding positions include leucine 10, aspartate 87, valine 90, 115-116, leucine 166, alanine 209, and histidine 234; that span reads SI.

Belongs to the diphthine synthase family. Homodimer.

The enzyme catalyses 2-[(3S)-amino-3-carboxypropyl]-L-histidyl-[translation elongation factor 2] + 3 S-adenosyl-L-methionine = diphthine-[translation elongation factor 2] + 3 S-adenosyl-L-homocysteine + 3 H(+). The protein operates within protein modification; peptidyl-diphthamide biosynthesis. S-adenosyl-L-methionine-dependent methyltransferase that catalyzes the trimethylation of the amino group of the modified target histidine residue in translation elongation factor 2 (EF-2), to form an intermediate called diphthine. The three successive methylation reactions represent the second step of diphthamide biosynthesis. This is Diphthine synthase from Thermococcus onnurineus (strain NA1).